Reading from the N-terminus, the 1161-residue chain is Nuclear receptor-interacting protein 1 (1161 aa).

The segment at 1-416 (MTHGEELGSD…FESSTPTTID (416 aa)) is interaction with ZNF366. The short motif at 21–25 (LEGLL) is the LXXLL motif 1 element. The tract at residues 34-68 (GTAINKKSAGHKEEDQNFNLSGSAFPSCQSNGPTV) is disordered. Over residues 50–68 (NFNLSGSAFPSCQSNGPTV) the composition is skewed to polar residues. A repression domain 1 region spans residues 78 to 335 (MLHLKKARLL…LNGQARALPA (258 aa)). Serine 104 carries the post-translational modification Phosphoserine. Residue lysine 111 is modified to N6-acetyllysine; alternate. Lysine 111 is covalently cross-linked (Glycyl lysine isopeptide (Lys-Gly) (interchain with G-Cter in SUMO2); alternate). The short motif at 133–137 (LASLL) is the LXXLL motif 2 element. Lysine 158 is modified (N6-acetyllysine). A Glycyl lysine isopeptide (Lys-Gly) (interchain with G-Cter in SUMO2) cross-link involves residue lysine 170. The LXXLL motif 3 motif lies at 185 to 189 (LKTLL). Glycyl lysine isopeptide (Lys-Gly) (interchain with G-Cter in SUMO2) cross-links involve residues lysine 195 and lysine 198. Threonine 207 is subject to Phosphothreonine. At serine 218 the chain carries Phosphoserine. Residues 267-271 (LALLL) carry the LXXLL motif 4 motif. An N6-acetyllysine mark is found at lysine 287 and lysine 311. Position 358 is a phosphoserine (serine 358). Residue lysine 374 forms a Glycyl lysine isopeptide (Lys-Gly) (interchain with G-Cter in SUMO2) linkage. The residue at position 380 (serine 380) is a Phosphoserine. The short motif at 382-386 (LLHLL) is the LXXLL motif 5 element. The segment at 393–436 (TPMNGHSQNERASSFESSTPTTIDEYSDNNPSFTDDSSGDESSY) is disordered. The repression domain 2 stretch occupies residues 411 to 701 (TPTTIDEYSD…PAGPEPGLPG (291 aa)). The required for targeting to small nuclear foci stretch occupies residues 432–473 (DESSYSNCVPIDLSCKHRIEKPEAERPVSLENLTQSLLNTWD). A CTBP-binding; principal site motif is present at residues 441 to 447 (PIDLSCK). 2 positions are modified to N6-acetyllysine: lysine 447 and lysine 482. A Phosphoserine modification is found at serine 488. The LXXLL motif 6 signature appears at 501 to 505 (LLQLL). Residue lysine 509 forms a Glycyl lysine isopeptide (Lys-Gly) (interchain with G-Cter in SUMO2) linkage. Positions 517–552 (NASPQDIHSDGTKFSPQNYTRTSVIESPSTNRTTPV) are enriched in polar residues. The tract at residues 517–559 (NASPQDIHSDGTKFSPQNYTRTSVIESPSTNRTTPVSTPPLYT) is disordered. Serine 519 carries the phosphoserine modification. At lysine 529 the chain carries N6-acetyllysine. Residues serine 531, serine 543, and serine 565 each carry the phosphoserine modification. Positions 566 to 570 (PINLS) match the CTBP-binding motif. 3 disordered regions span residues 604-623 (TKGKESQAEKPAPSEGAQNS), 639-702 (GLQS…LPGC), and 717-747 (LLGNSSKGKNEKKEKTPARDEAPQEHSERAA). At lysine 607 the chain carries N6-acetyllysine. Serine 672 carries the post-translational modification Phosphoserine. Residues 714-718 (LQLLL) carry the LXXLL motif 7 motif. The span at 724–747 (GKNEKKEKTPARDEAPQEHSERAA) shows a compositional bias: basic and acidic residues. Residues 736 to 886 (DEAPQEHSER…TAVDTANHHS (151 aa)) form a repression domain 3 region. An interaction with ZNF366 region spans residues 754–1161 (VKIKSEPCDD…NALTIKKESE (408 aa)). Residues lysine 757 and lysine 803 each participate in a glycyl lysine isopeptide (Lys-Gly) (interchain with G-Cter in SUMO2) cross-link. Position 808 is a phosphoserine (serine 808). The short motif at 820–824 (LSRLL) is the LXXLL motif 8 element. The interval 829–848 (ESYPADEQDKSHRNSELPTL) is disordered. Glycyl lysine isopeptide (Lys-Gly) (interchain with G-Cter in SUMO2) cross-links involve residues lysine 851 and lysine 902. Lysine 932 is subject to N6-acetyllysine; alternate. Residue lysine 932 forms a Glycyl lysine isopeptide (Lys-Gly) (interchain with G-Cter in SUMO2); alternate linkage. Positions 937–941 (LKQLL) match the LXXLL motif 9 motif. The CTBP-binding motif lies at 947 to 951 (VRDLS). Basic and acidic residues predominate over residues 950-962 (LSPHRSDSVPDTK). Residues 950–976 (LSPHRSDSVPDTKKKGHKNNAPGSKPE) are disordered. A Phosphoserine modification is found at serine 1003. The tract at residues 1063–1076 (LTKTNPILYYMLQK) is ligand-dependent nuclear receptor binding. Glycyl lysine isopeptide (Lys-Gly) (interchain with G-Cter in SUMO2) cross-links involve residues lysine 1108, lysine 1118, and lysine 1157. Residues 1121–1161 (FFNLRSPYNSHMGNNASRPHSTNGEVYGLLGNALTIKKESE) are repression domain 4.

In terms of assembly, interacts with CTBP1, CTBP2, ERS1, HDAC1, HDAC2, HDAC5, HDAC6, NR2C2, NR3C1, NR3C2, YWHAH, JUN and FOS. Found in a complex with both NR3C1 and YWHAH. Interacts with NR2C1 (sumoylated form and via the ligand-binding domain); the interaction results in promoting the repressor activity of NR2C1. Interacts with RARA and RXRB homodimers and RARA/RXRB heterodimers in the presence of ligand. Interacts with HDAC1 and HDAC3 via its N-terminal domain. Interacts with ZNF366. Interacts with RORA. In terms of processing, acetylation abolishes interaction with CTBP1. Phosphorylation enhances interaction with YWHAH. Acetylation regulates its nuclear translocation and corepressive activity. Expressed in the embryonic placenta. In the adult, expression is strong in the testis and brain. Also expressed at a high level in the white adipose tissue. Expressed constantly but at a weaker level in the adult heart, lung, stomach and kidney. Expressed moderately in the skeletal muscle. Expressed at a low level in the adult spleen, liver and brown adipose tissue. Expressed in the ovary at a high level in granulosa cells and at a lower level in the thecal and interstitial compartments.

The protein localises to the nucleus. In terms of biological role, modulates transcriptional repression by nuclear hormone receptors such as NR2C1, thyroid hormone receptor and retinoic acid receptor/RARA. Essential for cumulus expansion and follicle rupture during ovulation. Also controls the balance between fat accumulation and energy expenditure. Positive regulator of the circadian clock gene expression: stimulates transcription of BMAL1, CLOCK and CRY1 by acting as a coactivator for RORA and RORC. Involved in the regulation of ovarian function. Plays a role in renal development. This Mus musculus (Mouse) protein is Nuclear receptor-interacting protein 1.